The primary structure comprises 313 residues: Alpha-S1-casein (313 aa).

An N-terminal signal peptide occupies residues 1–15; sequence MKLLILTCLVAAAFA. The span at 77 to 96 shows a compositional bias: low complexity; it reads ASEEQAMASAQEDSSISSSS. The tract at residues 77 to 111 is disordered; it reads ASEEQAMASAQEDSSISSSSEESEEAIPNITEQKN. A phosphoserine mark is found at serine 90, serine 91, serine 93, serine 94, serine 95, and serine 96. 15 consecutive repeat copies span residues 135–140, 141–146, 147–152, 153–158, 159–164, 165–170, 171–176, 177–182, 183–188, 189–194, 195–200, 201–206, 207–212, 213–218, and 219–224. The tract at residues 135-224 is 15 X 6 AA tandem repeats; that stretch reads LLQKASLAKQ…QQASLAQKHH (90 aa).

Belongs to the alpha-casein family. In terms of tissue distribution, mammary gland specific. Secreted in milk.

It localises to the secreted. Its function is as follows. Important role in the capacity of milk to transport calcium phosphate. The chain is Alpha-S1-casein (Csn1s1) from Mus musculus (Mouse).